The chain runs to 308 residues: Cobalamin biosynthesis protein CobD (308 aa).

6 helical membrane-spanning segments follow: residues 1–21, 50–70, 71–91, 151–171, 202–222, and 284–304; these read MEIL…GDPP, FVYG…PVYF, LLDW…AILF, IGDG…PGVM, VLNF…SFFG, and LVLI…VIYF.

This sequence belongs to the CobD/CbiB family.

It is found in the cell membrane. The protein operates within cofactor biosynthesis; adenosylcobalamin biosynthesis. Functionally, converts cobyric acid to cobinamide by the addition of aminopropanol on the F carboxylic group. The sequence is that of Cobalamin biosynthesis protein CobD from Dehalococcoides mccartyi (strain CBDB1).